An 87-amino-acid polypeptide reads, in one-letter code: Putative regulatory protein ABC2323 (87 aa).

It belongs to the RemA family.

This Shouchella clausii (strain KSM-K16) (Alkalihalobacillus clausii) protein is Putative regulatory protein ABC2323.